The sequence spans 754 residues: MRAVSVWYCCPWGLLLLHCLCSFSVGSPSPSISPEKKVGSQGLRFRLAGFPRKPYEGRVEIQRAGEWGTICDDDFTLQAAHVLCRELGFTEATGWTHSAKYGPGTGRIWLDNLSCRGTEGSVTECASRGWGNSDCTHDEDAGVICKDQRLPGFSDSNVIEVEHQLQVEEVRLRPAVEWGRRPLPVTEGLVEVRLPEGWSQVCDKGWSAHNSHVVCGMLGFPGEKRVNMAFYRMLAQKKQHSFGLHSVACVGTEAHLSLCSLEFYRANDTTRCSGGNPAVVSCVLGPLYATFTGQKKQQHSKPQGEARVRLKGGAHQGEGRVEVLKAGTWGTVCDRKWDLQAASVVCRELGFGTAREALSGARMGQGMGAIHLSEVRCSGQEPSLWRCPSKNITAEDCSHSQDAGVRCNLPYTGVETKIRLSGGRSRYEGRVEVQIGIPGHLRWGLICGDDWGTLEAMVACRQLGLGYANHGLQETWYWDSGNVTEVVMSGVRCTGSELSLNQCAHHSSHITCKKTGTRFTAGVICSETASDLLLHSALVQETAYIEDRPLHMLYCAAEENCLASSARSANWPYGHRRLLRFSSQIHNLGRADFRPKAGRHSWVWHECHGHYHSMDIFTHYDILTPNGTKVAEGHKASFCLEDTECQEDVSKRYECANFGEQGITVGCWDLYRHDIDCQWIDITDVKPGNYILQVVINPNFEVAESDFTNNAMKCNCKYDGHRIWVHNCHIGDAFSEEANRRFERYPGQTSNQIV.

Positions 1–26 (MRAVSVWYCCPWGLLLLHCLCSFSVG) are cleaved as a signal peptide. 4 SRCR domains span residues 45–146 (FRLA…VICK), 170–283 (VRLR…VSCV), 308–408 (VRLK…VRCN), and 418–526 (IRLS…VICS). 17 disulfides stabilise this stretch: Cys71/Cys135, Cys84/Cys145, Cys115/Cys125, Cys202/Cys272, Cys215/Cys282, Cys249/Cys259, Cys333/Cys397, Cys346/Cys407, Cys377/Cys387, Cys447/Cys512, Cys460/Cys525, Cys493/Cys503, Cys555/Cys561, Cys607/Cys655, Cys639/Cys645, Cys667/Cys677, and Cys714/Cys728. Residue Asn112 is glycosylated (N-linked (GlcNAc...) asparagine). A glycan (N-linked (GlcNAc...) asparagine) is linked at Asn267. 2 N-linked (GlcNAc...) asparagine glycosylation sites follow: Asn391 and Asn482. The segment at 530–733 (SDLLLHSALV…WVHNCHIGDA (204 aa)) is lysyl-oxidase like. Cu cation is bound by residues His608, His610, and His612. N-linked (GlcNAc...) asparagine glycosylation occurs at Asn626. The segment at residues 635 to 671 (KASFCLEDTECQEDVSKRYECANFGEQGITVGCWDLY) is a cross-link (lysine tyrosylquinone (Lys-Tyr)). 2',4',5'-topaquinone is present on Tyr671.

Belongs to the lysyl oxidase family. Cu cation is required as a cofactor. It depends on lysine tyrosylquinone residue as a cofactor. The lysine tyrosylquinone cross-link (LTQ) is generated by condensation of the epsilon-amino group of a lysine with a topaquinone produced by oxidation of tyrosine. Expressed in palate: predominantly present in the palate mesenchyme and tongue (at protein level). In spine, expressed in the original intervertebral disk, cartilage primordia, anterior and posterior longitudinal ligaments, meninges of spinal cord, lung and heart. In eyes, strongly expressed in the skin of the eyelid and weakly expressed in the cornea and sclera. In lung, predominantly expressed in the pulmonary mesenchyme. In developing muscle, expressed at myofiber ends (at protein level).

The protein resides in the secreted. The protein localises to the extracellular space. It is found in the cytoplasm. Its subcellular location is the nucleus. The catalysed reaction is L-lysyl-[protein] + O2 + H2O = (S)-2-amino-6-oxohexanoyl-[protein] + H2O2 + NH4(+). It catalyses the reaction N(6)-acetyl-L-lysyl-[protein] + O2 + H2O = acetamide + (S)-2-amino-6-oxohexanoyl-[protein] + H2O2. In terms of biological role, protein-lysine 6-oxidase that mediates the oxidation of peptidyl lysine residues to allysine in target proteins. Catalyzes the post-translational oxidative deamination of peptidyl lysine residues in precursors of elastin and different types of collagens, a prerequisite in the formation of cross-links between collagens and elastin. Required for somite boundary formation by catalyzing oxidation of fibronectin (FN1), enhancing integrin signaling in myofibers and their adhesion to the myotendinous junction (MTJ). Acts as a regulator of inflammatory response by inhibiting differentiation of naive CD4(+) T-cells into T-helper Th17 or regulatory T-cells (Treg): acts by interacting with STAT3 in the nucleus and catalyzing both deacetylation and oxidation of lysine residues on STAT3, leading to disrupt STAT3 dimerization and inhibit STAT3 transcription activity. Oxidation of lysine residues to allysine on STAT3 preferentially takes place on lysine residues that are acetylated. Also able to catalyze deacetylation of lysine residues on STAT3. The polypeptide is Lysyl oxidase homolog 3 (Mus musculus (Mouse)).